A 544-amino-acid chain; its full sequence is Chaperonin GroEL (544 aa).

ATP contacts are provided by residues 30–33, Lys-51, 87–91, Gly-415, and Asp-495; these read TLGP and DGTTT.

This sequence belongs to the chaperonin (HSP60) family. As to quaternary structure, forms a cylinder of 14 subunits composed of two heptameric rings stacked back-to-back. Interacts with the co-chaperonin GroES.

The protein localises to the cytoplasm. The enzyme catalyses ATP + H2O + a folded polypeptide = ADP + phosphate + an unfolded polypeptide.. Its function is as follows. Together with its co-chaperonin GroES, plays an essential role in assisting protein folding. The GroEL-GroES system forms a nano-cage that allows encapsulation of the non-native substrate proteins and provides a physical environment optimized to promote and accelerate protein folding. The polypeptide is Chaperonin GroEL (Bartonella bacilliformis).